A 156-amino-acid polypeptide reads, in one-letter code: 6,7-dimethyl-8-ribityllumazine synthase (156 aa).

5-amino-6-(D-ribitylamino)uracil contacts are provided by residues Phe23, 57-59 (SFE), and 81-83 (AVI). 86 to 87 (GT) is a (2S)-2-hydroxy-3-oxobutyl phosphate binding site. The Proton donor role is filled by His89. Tyr114 is a 5-amino-6-(D-ribitylamino)uracil binding site. Residue Arg128 participates in (2S)-2-hydroxy-3-oxobutyl phosphate binding.

Belongs to the DMRL synthase family. Forms an icosahedral capsid composed of 60 subunits, arranged as a dodecamer of pentamers.

The enzyme catalyses (2S)-2-hydroxy-3-oxobutyl phosphate + 5-amino-6-(D-ribitylamino)uracil = 6,7-dimethyl-8-(1-D-ribityl)lumazine + phosphate + 2 H2O + H(+). It functions in the pathway cofactor biosynthesis; riboflavin biosynthesis; riboflavin from 2-hydroxy-3-oxobutyl phosphate and 5-amino-6-(D-ribitylamino)uracil: step 1/2. Its function is as follows. Catalyzes the formation of 6,7-dimethyl-8-ribityllumazine by condensation of 5-amino-6-(D-ribitylamino)uracil with 3,4-dihydroxy-2-butanone 4-phosphate. This is the penultimate step in the biosynthesis of riboflavin. The polypeptide is 6,7-dimethyl-8-ribityllumazine synthase (Halorhodospira halophila (strain DSM 244 / SL1) (Ectothiorhodospira halophila (strain DSM 244 / SL1))).